Reading from the N-terminus, the 174-residue chain is uncharacterized protein (174 aa).

A signal peptide spans 1 to 31; the sequence is MCCVYRMNRPASGLTVVFCGKLSGKPGPKSA. The tract at residues 39 to 59 is disordered; sequence KSGADDGGENPRFFSAGPRTE.

This is an uncharacterized protein from Escherichia coli (strain K12).